We begin with the raw amino-acid sequence, 30 residues long: Methanobactin mb-OB3b (30 aa).

Positions 1-19 (MTVKIAQKKVLPVIGRAAA) are excised as a propeptide. Residues 20-21 (LC) constitute a cross-link (2-(3-methylbutanoyl)-5-hydroxyoxazole-4-carbothionic acid (Leu-Cys)). Residues cysteine 21 and cysteine 27 each coordinate Cu(2+). An intrachain disulfide couples cysteine 24 to cysteine 29. The segment at residues 26 to 27 (PC) is a cross-link (proline 5-hydroxy-oxazole-4-carbothionic acid (Pro-Cys)).

As to quaternary structure, monomer. In the absence of copper, may exist as a dimer or an oligomer.

Its subcellular location is the secreted. The protein resides in the cytoplasm. The catalysed reaction is 2 superoxide + 2 H(+) = H2O2 + O2. Its function is as follows. Chalkophore involved in scavenging, uptake and suppression of toxicity of copper. Each apo-methanobactin (apo-mb) complexes 1 Cu(2+) or Cu(1+) ion to form Cu(1+)-mb (Cu-mb) which is then taken up by the cell. Enhances growth rate in the presence of copper and reduces growth lag upon exposition to elevated levels of copper. Cu-mb contributes to the switchover from soluble methane monooxygenase (sMMO) to the membrane-bound particulate MMO (pMMO) by inducing transcription of pMMO subunit A. It also stimulates the enzymatic activity of pMMO. In the absence of copper, binds other metal ions, like Zn(2+), Ag(1+), Au(3+), Co(2+), Cd(2+), Fe(3+), Hg(2+), Mn(2+), Ni(2+), Pb(2+) or U(6+), but not Ba(2+), Ca(2+), La(2+), Mg(2+) or Sr(2+). Uptake is an active process, which may involve TonB-dependent transporters, and as such does not involve porins. Cu-Mb can be taken up by other methanotrophic bacteria but not by E.coli. Has Cu-dependent superoxide dismutase-like activity. Shows reductant-dependent oxidase and hydrogen peroxide reductase activities. Reduces copper-levels in liver in a rat model of Wilson disease. The protein is Methanobactin mb-OB3b of Methylosinus trichosporium.